We begin with the raw amino-acid sequence, 527 residues long: Eukaryotic translation initiation factor 4B1 (527 aa).

2 disordered regions span residues 1–370 and 453–527; these read MAKP…REVV and FGQR…RQGW. Composition is skewed to low complexity over residues 35–45 and 74–85; these read AAAGGAASFPS and GAAGAPRRVAPA. Composition is skewed to basic and acidic residues over residues 102–155 and 181–194; these read PRER…DNWG and RSDDIDNWSRDKKP. A Nuclear localization signal motif is present at residues 196 to 203; that stretch reads PSRYPSLG. The segment covering 203 to 232 has biased composition (gly residues); the sequence is GTGGGFRESSGGGFRESSGGGFRESSGGGF. Residues 293 to 317 show a composition bias toward basic and acidic residues; that stretch reads KPREEVLAEKGLDWRKMEGEIEKKT. Residues 319–336 show a composition bias toward low complexity; it reads RPTSSHSSRPNSAHSSRP. 2 stretches are compositionally biased toward basic and acidic residues: residues 472-485 and 496-510; these read EEPHVAVAHMDRPR and PVEERWGFHGSRERG. A compositionally biased stretch (low complexity) spans 518 to 527; sequence SDRSSTRQGW.

This sequence belongs to the eIF-4 subunit B family. In terms of assembly, homodimer. Nonspherical monomer. mRNA-discriminating component of initiation complexes. Post-translationally, phosphorylated.

Its subcellular location is the nucleus. Its function is as follows. Promotes the eIF4F and eIF4A RNA-dependent ATP-hydrolysis activity with different efficiency depending on mRNAs, thus providing mRNA discrimination during initiation of translation. The chain is Eukaryotic translation initiation factor 4B1 from Triticum aestivum (Wheat).